The sequence spans 912 residues: Metabotropic glutamate receptor 4 (912 aa).

The signal sequence occupies residues 1–32 (MPGKSGLGWWWARLPLCLLLSLYGPWMPSSLG). Topologically, residues 33–586 (KPKGHPHMNS…PIIKLEWDSP (554 aa)) are extracellular. Cysteine 67 and cysteine 109 are oxidised to a cystine. N-linked (GlcNAc...) asparagine glycosylation occurs at asparagine 98. Residues serine 159, 180–182 (AST), and tyrosine 230 each bind L-glutamate. Disulfide bonds link cysteine 249-cysteine 538, cysteine 372-cysteine 388, cysteine 428-cysteine 435, cysteine 520-cysteine 539, cysteine 524-cysteine 542, cysteine 545-cysteine 557, and cysteine 560-cysteine 573. Asparagine 301 carries an N-linked (GlcNAc...) asparagine glycan. Position 312 (aspartate 312) interacts with L-glutamate. Lysine 405 is a binding site for L-glutamate. Asparagine 454 and asparagine 484 each carry an N-linked (GlcNAc...) asparagine glycan. A glycan (N-linked (GlcNAc...) asparagine) is linked at asparagine 569. The helical transmembrane segment at 587–607 (WAVLPLFLAVVGIAATLFVVI) threads the bilayer. Over 608–624 (TFVRYNDTPIVKASGRE) the chain is Cytoplasmic. A helical transmembrane segment spans residues 625 to 645 (LSYVLLAGIFLCYATTFLMIA). Residues 646–653 (EPDLGTCS) are Extracellular-facing. A helical transmembrane segment spans residues 654–671 (LRRIFLGLGMSISYAALL). Topologically, residues 672-699 (TKTNRIYRIFEQGKRSVSAPRFISPASQ) are cytoplasmic. A helical membrane pass occupies residues 700 to 720 (LAITFSLISLQLLGICVWFVV). Over 721–751 (DPSHSVVDFQDQRTLDPRFARGVLKCDISDL) the chain is Extracellular. A helical transmembrane segment spans residues 752–772 (SLICLLGYSMLLMVTCTVYAI). The Cytoplasmic portion of the chain corresponds to 773-786 (KTRGVPETFNEAKP). The helical transmembrane segment at 787–807 (IGFTMYTTCIVWLAFIPIFFG) threads the bilayer. Over 808-826 (TSQSADKLYIQTTTLTVSV) the chain is Extracellular. The helical transmembrane segment at 827-847 (SLSASVSLGMLYMPKVYIILF) threads the bilayer. At 848-912 (HPEQNVPKRK…TYVTYTNHAI (65 aa)) the chain is on the cytoplasmic side.

This sequence belongs to the G-protein coupled receptor 3 family. As to quaternary structure, interacts with PICK1.

The protein localises to the cell membrane. Functionally, G-protein coupled receptor for glutamate. Ligand binding causes a conformation change that triggers signaling via guanine nucleotide-binding proteins (G proteins) and modulates the activity of down-stream effectors. Signaling inhibits adenylate cyclase activity. The chain is Metabotropic glutamate receptor 4 (GRM4) from Macaca fascicularis (Crab-eating macaque).